The following is an 89-amino-acid chain: Acylphosphatase (89 aa).

One can recognise an Acylphosphatase-like domain in the interval 3 to 89 (RFTARVAGLV…QSDLTDFRRK (87 aa)). Catalysis depends on residues R18 and N36.

It belongs to the acylphosphatase family.

It carries out the reaction an acyl phosphate + H2O = a carboxylate + phosphate + H(+). This chain is Acylphosphatase (acyP), found in Frankia casuarinae (strain DSM 45818 / CECT 9043 / HFP020203 / CcI3).